The chain runs to 366 residues: Cobalt-precorrin-5B C(1)-methyltransferase (366 aa).

This sequence belongs to the CbiD family.

It carries out the reaction Co-precorrin-5B + S-adenosyl-L-methionine = Co-precorrin-6A + S-adenosyl-L-homocysteine. Its pathway is cofactor biosynthesis; adenosylcobalamin biosynthesis; cob(II)yrinate a,c-diamide from sirohydrochlorin (anaerobic route): step 6/10. In terms of biological role, catalyzes the methylation of C-1 in cobalt-precorrin-5B to form cobalt-precorrin-6A. This chain is Cobalt-precorrin-5B C(1)-methyltransferase, found in Pseudomonas aeruginosa (strain UCBPP-PA14).